Reading from the N-terminus, the 238-residue chain is Monocyte to macrophage differentiation factor (238 aa).

Residues 1-28 (MRFKNRFQRFMNHRAPANGRYKPTCYEH) lie on the Cytoplasmic side of the membrane. The helical transmembrane segment at 29–49 (AANCYTHAFLIVPAIVGSALL) threads the bilayer. The Lumenal segment spans residues 50–61 (HRLSDDCWEKIT). The helical transmembrane segment at 62 to 82 (AWIYGMGLCALFIVSTVFHIV) threads the bilayer. The Cytoplasmic portion of the chain corresponds to 83–101 (SWKKSHLRTVEHCFHMCDR). A helical membrane pass occupies residues 102 to 122 (MVIYFFIAASYAPWLNLRELG). The Lumenal portion of the chain corresponds to 123–124 (PL). A helical membrane pass occupies residues 125-145 (ASHMRWFIWLMAAGGTIYVFL). At 146 to 151 (YHEKYK) the chain is on the cytoplasmic side. Residues 152–172 (VVELFFYLTMGFSPALVVTSM) traverse the membrane as a helical segment. Residues 173-174 (NN) lie on the Lumenal side of the membrane. The helical transmembrane segment at 175 to 195 (TDGLQELACGGLIYCLGVVFF) threads the bilayer. Topologically, residues 196–198 (KSD) are cytoplasmic. The helical transmembrane segment at 199–219 (GIIPFAHAIWHLFVATAAAVH) threads the bilayer. Over 220-238 (YYAIWKYLYRSPTDFMRHL) the chain is Lumenal.

It belongs to the ADIPOR family. In terms of tissue distribution, exhibits relatively ubiquitous expression with preferential expression in mature (in vitro differentiated) macrophages.

Its subcellular location is the late endosome membrane. It localises to the lysosome membrane. Functionally, involved in the dynamics of lysosomal membranes associated with microglial activation following brain lesion. This is Monocyte to macrophage differentiation factor from Homo sapiens (Human).